A 696-amino-acid chain; its full sequence is Lutropin-choriogonadotropic hormone receptor (696 aa).

Residues 1–27 form the signal peptide; the sequence is MRRRSLALRLLLALLLLPPPLPQTLLG. Topologically, residues 28-358 are extracellular; that stretch reads APCPEPCSCR…AFNPCEDIMG (331 aa). An N-linked (GlcNAc...) asparagine glycan is attached at Asn99. LRR repeat units follow at residues 122 to 147, 149 to 171, 172 to 196, 198 to 220, 221 to 244, and 250 to 271; these read LPRL…IFSS, FNFI…AFQG, MNNE…AFNG, TLIS…AFRG, ARGP…GLES, and ATSS…LLDA. Asn174 and Asn195 each carry an N-linked (GlcNAc...) asparagine glycan. N-linked (GlcNAc...) asparagine glycosylation is found at Asn291, Asn299, and Asn313. At Tyr331 the chain carries Sulfotyrosine. Residues 359-386 form a helical membrane-spanning segment; sequence YDFLRVLIWLINILAIMGNVTVLFVLLT. At 387-395 the chain is on the cytoplasmic side; sequence SHYKLTVPR. The helical transmembrane segment at 396–418 threads the bilayer; the sequence is FLMCNLSFADFCMGLYLLLIASV. Topologically, residues 419–439 are extracellular; sequence DAQTKGQYYNHAIDWQTGNGC. A disulfide bridge connects residues Cys439 and Cys514. A helical membrane pass occupies residues 440 to 462; that stretch reads SVAGFFTVFASELSVYTLTVITL. Residues 463–482 are Cytoplasmic-facing; that stretch reads ERWHTITYAIQLDQKLRLRH. A helical membrane pass occupies residues 483–505; that stretch reads AIPIMLGGWLFSTLIAMLPLVGV. Over 506–525 the chain is Extracellular; the sequence is SSYMKVSICLPMDVETTLSQ. A helical membrane pass occupies residues 526–547; sequence VYILTILILNVVAFIIICACYI. Residues 548 to 570 lie on the Cytoplasmic side of the membrane; that stretch reads KIYFAVQNPELMATNKDTKIAKK. Residues 571 to 594 traverse the membrane as a helical segment; the sequence is MAVLIFTDFTCMAPISFFAISAAL. Residues 595–605 lie on the Extracellular side of the membrane; sequence KVPLITVTNSK. A helical membrane pass occupies residues 606-626; it reads VLLVLFYPVNSCANPFLYAIF. Residues 627 to 696 are Cytoplasmic-facing; the sequence is TKAFRRDFFL…VMDKTCYKDC (70 aa). S-palmitoyl cysteine attachment occurs at residues Cys643 and Cys644.

It belongs to the G-protein coupled receptor 1 family. FSH/LSH/TSH subfamily. Sulfated.

The protein resides in the cell membrane. Its function is as follows. Receptor for lutropin-choriogonadotropic hormone. The activity of this receptor is mediated by G proteins which activate adenylate cyclase. The polypeptide is Lutropin-choriogonadotropic hormone receptor (LHCGR) (Sus scrofa (Pig)).